The following is a 366-amino-acid chain: E3 ubiquitin-protein ligase SINA-like 1 (366 aa).

Residues 1 to 37 (MVKGTNAEQALAREEASSSRPKRQRVPSIVEEEGENG) are disordered. Residues 56-92 (CPICCNALTIPIFQCDKGHIACSSCCTNVSNKCPYCS) form an RING-type; degenerate zinc finger. Positions 106 to 354 (VVEAFIVRCP…KGTYICIRSL (249 aa)) are SBD. An SIAH-type; degenerate zinc finger spans residues 109–232 (AFIVRCPIVA…LYSHYAANHK (124 aa)). Residues C114, C186, H198, C202, C209, C214, H226, and H231 each coordinate Zn(2+).

The protein belongs to the SINA (Seven in absentia) family.

It carries out the reaction S-ubiquitinyl-[E2 ubiquitin-conjugating enzyme]-L-cysteine + [acceptor protein]-L-lysine = [E2 ubiquitin-conjugating enzyme]-L-cysteine + N(6)-ubiquitinyl-[acceptor protein]-L-lysine.. It participates in protein modification; protein ubiquitination. In terms of biological role, E3 ubiquitin-protein ligase that mediates ubiquitination and subsequent proteasomal degradation of target proteins. E3 ubiquitin ligases accept ubiquitin from an E2 ubiquitin-conjugating enzyme in the form of a thioester and then directly transfers the ubiquitin to targeted substrates. It probably triggers the ubiquitin-mediated degradation of different substrates. This is E3 ubiquitin-protein ligase SINA-like 1 from Arabidopsis thaliana (Mouse-ear cress).